The sequence spans 614 residues: Fem-3 mRNA-binding factor 1 (614 aa).

The span at 1-24 shows a compositional bias: polar residues; the sequence is MDQSKMRYTNQFRKTPQKPTSTEV. The tract at residues 1-34 is disordered; that stretch reads MDQSKMRYTNQFRKTPQKPTSTEVGNHHTPAHSP. The PUM-HD domain maps to 160 to 564; sequence TRSNNVLPTW…KMIETLAHLR (405 aa). 8 Pumilio repeats span residues 185 to 223, 224 to 263, 269 to 305, 306 to 342, 343 to 382, 398 to 434, 436 to 471, and 483 to 519; these read EVLD…QLFE, QVIG…NIKR, NFIS…KLVQ, ALPR…EFIV, DFVA…DLTS, SVTN…CIIE, CLMR…EMMD, and TGKD…RQTK. Positions 283 to 614 are binding to gld-3 isoform A; sequence FACRVIQSSL…NLRLMRTFSP (332 aa).

In terms of assembly, interacts (via C-terminus) with gld-3 isoform A in an RNA-independent manner. Expressed specifically in the germline (at protein level).

The protein resides in the cytoplasm. In terms of biological role, RNA-binding protein that binds to the consensus sequence 5'-UGUGCCAUA-3' in mRNA 3'-UTRs. Involved in the control of stem cells and sex determination in the C.elegans hermaphrodite germline. May also play a role in the hermaphrodite germline proliferation and oogenesis. Binds specifically to the regulatory region of fem-3 3'-UTR and mediates the sperm/oocyte switch. Negatively regulates gld-3 expression, possibly by directly binding to two sites within the 3'-UTR of gld-3 isoform b. In association with the cye-1/cdk-2 complex, negatively regulates gld-1 expression in the distal germline cells of the mitotic zone. By binding to the 3'-UTR, represses phosphatase lip-1 expression in the distal part of the germline mitotic zone. Suppresses germline tumor formation by preventing the dedifferentiation of secondary spermatocytes. The chain is Fem-3 mRNA-binding factor 1 (fbf-1) from Caenorhabditis elegans.